The sequence spans 265 residues: Polyphosphate glucokinase (265 aa).

A compositionally biased stretch (polar residues) spans 1 to 18; sequence MTSTGPETSETPGATTQR. Residues 1–22 are disordered; the sequence is MTSTGPETSETPGATTQRHGFG. 24 to 29 is an ATP binding site; the sequence is DVGGSG.

Belongs to the ROK (NagC/XylR) family. As to quaternary structure, homodimer.

The enzyme catalyses [phosphate](n) + D-glucose = [phosphate](n-1) + D-glucose 6-phosphate + H(+). The catalysed reaction is D-glucose + ATP = D-glucose 6-phosphate + ADP + H(+). In terms of biological role, catalyzes the phosphorylation of glucose using polyphosphate or ATP as the phosphoryl donor. Polyphosphate, rather than ATP, seems to be the major phosphate donor for the enzyme in M.tuberculosis. GTP, UTP and CTP can replace ATP as phosphoryl donor. This Mycobacterium tuberculosis (strain ATCC 25177 / H37Ra) protein is Polyphosphate glucokinase (ppgK).